A 212-amino-acid chain; its full sequence is ATP phosphoribosyltransferase (212 aa).

This sequence belongs to the ATP phosphoribosyltransferase family. Short subfamily. Heteromultimer composed of HisG and HisZ subunits.

The protein resides in the cytoplasm. The catalysed reaction is 1-(5-phospho-beta-D-ribosyl)-ATP + diphosphate = 5-phospho-alpha-D-ribose 1-diphosphate + ATP. It participates in amino-acid biosynthesis; L-histidine biosynthesis; L-histidine from 5-phospho-alpha-D-ribose 1-diphosphate: step 1/9. Its function is as follows. Catalyzes the condensation of ATP and 5-phosphoribose 1-diphosphate to form N'-(5'-phosphoribosyl)-ATP (PR-ATP). Has a crucial role in the pathway because the rate of histidine biosynthesis seems to be controlled primarily by regulation of HisG enzymatic activity. This is ATP phosphoribosyltransferase from Clostridium novyi (strain NT).